The sequence spans 346 residues: Cell shape-determining protein MreC (346 aa).

Residues 89-118 are a coiled coil; the sequence is NRRLKAELAEMRQWRDRALALQDQNDRFKS. The interval 292-346 is disordered; that stretch reads SLPPVTTEDPQTSILSNPVSRPVAPTPSPATATPSAAPAARPATTATPPQTGAPR. Over residues 299–308 the composition is skewed to polar residues; sequence EDPQTSILSN. Low complexity predominate over residues 309-340; sequence PVSRPVAPTPSPATATPSAAPAARPATTATPP.

This sequence belongs to the MreC family. Interacts with penicillin-binding proteins (PBP2, PBP1a, PBP1b, PBP2a and PBP2b). Interacts with outer membrane proteins belonging to the TonB-dependent receptor family of transport proteins.

The protein resides in the periplasm. Its function is as follows. Involved in formation and maintenance of cell shape. Required for the spatial organization of components of the peptidoglycan-synthesizing holoenzyme in the periplasm and peptidoglycan synthetic activity. This chain is Cell shape-determining protein MreC, found in Caulobacter vibrioides (strain NA1000 / CB15N) (Caulobacter crescentus).